Here is a 495-residue protein sequence, read N- to C-terminus: UDP-N-acetylmuramoyl-L-alanyl-D-glutamate--2,6-diaminopimelate ligase (495 aa).

Residues L27, S29, and 44–46 (HQA) contribute to the UDP-N-acetyl-alpha-D-muramoyl-L-alanyl-D-glutamate site. 116–122 (GTNGKTT) contacts ATP. Residues N157, 158-159 (TT), S185, Q191, and R193 contribute to the UDP-N-acetyl-alpha-D-muramoyl-L-alanyl-D-glutamate site. K225 carries the N6-carboxylysine modification. Meso-2,6-diaminopimelate is bound by residues R390, 414–417 (DNPR), G465, and E469. Residues 414 to 417 (DNPR) carry the Meso-diaminopimelate recognition motif motif.

The protein belongs to the MurCDEF family. MurE subfamily. The cofactor is Mg(2+). In terms of processing, carboxylation is probably crucial for Mg(2+) binding and, consequently, for the gamma-phosphate positioning of ATP.

It is found in the cytoplasm. The enzyme catalyses UDP-N-acetyl-alpha-D-muramoyl-L-alanyl-D-glutamate + meso-2,6-diaminopimelate + ATP = UDP-N-acetyl-alpha-D-muramoyl-L-alanyl-gamma-D-glutamyl-meso-2,6-diaminopimelate + ADP + phosphate + H(+). Its pathway is cell wall biogenesis; peptidoglycan biosynthesis. Its function is as follows. Catalyzes the addition of meso-diaminopimelic acid to the nucleotide precursor UDP-N-acetylmuramoyl-L-alanyl-D-glutamate (UMAG) in the biosynthesis of bacterial cell-wall peptidoglycan. The sequence is that of UDP-N-acetylmuramoyl-L-alanyl-D-glutamate--2,6-diaminopimelate ligase from Escherichia coli O157:H7.